We begin with the raw amino-acid sequence, 5488 residues long: Polyketide synthase PksN (5488 aa).

The tract at residues Arg3–Ile301 is condensation. Residues Gln165–Val205 form a WD 1 repeat. The tract at residues Thr493 to Val903 is adenylation. The stretch at Arg965 to Gly1006 is one WD 2 repeat. In terms of domain architecture, Carrier 1 spans Leu983–Lys1058. Ser1018 is subject to O-(pantetheine 4'-phosphoryl)serine. A Ketosynthase family 3 (KS3) 1 domain is found at Asp1089–Gln1515. Active-site for beta-ketoacyl synthase 1 activity residues include Cys1261, His1397, and His1437. The tract at residues His1700 to Arg1826 is N-terminal hotdog fold 1. The PKS/mFAS DH 1 domain maps to His1700–Thr1992. The Proton acceptor; for dehydratase activity 1 role is filled by His1729. Positions Asp1840–Thr1992 are C-terminal hotdog fold 1. The active-site Proton donor; for dehydratase activity 1 is the Asp1900. The WD 3 repeat unit spans residues Lys2165–Asn2204. In terms of domain architecture, Carrier 2 spans Ser2448–Tyr2525. Residue Ser2485 is modified to O-(pantetheine 4'-phosphoryl)serine. The Ketosynthase family 3 (KS3) 2 domain maps to Pro2576 to Glu3012. Catalysis depends on for beta-ketoacyl synthase 2 activity residues Cys2747, His2882, and His2928. Positions Lys3038–Val3109 form a coiled coil. The N-terminal hotdog fold 2 stretch occupies residues His3207–Asn3332. The 286-residue stretch at His3207 to Ser3492 folds into the PKS/mFAS DH 2 domain. His3236 functions as the Proton acceptor; for dehydratase activity 2 in the catalytic mechanism. Residues Gln3346–Ser3492 are C-terminal hotdog fold 2. Asp3408 functions as the Proton donor; for dehydratase activity 2 in the catalytic mechanism. A coiled-coil region spans residues Asp3626–Gly3655. The WD 4 repeat unit spans residues Gln3666–Gln3705. In terms of domain architecture, Carrier 3 spans Asp3952–Tyr4026. Residue Ser3986 is modified to O-(pantetheine 4'-phosphoryl)serine. The region spanning Pro4076–Glu4511 is the Ketosynthase family 3 (KS3) 3 domain. Active-site for beta-ketoacyl synthase 3 activity residues include Cys4245, His4380, and His4427. The interval His4706 to Asp4830 is N-terminal hotdog fold 3. In terms of domain architecture, PKS/mFAS DH 3 spans His4706–Pro4988. The active-site Proton acceptor; for dehydratase activity 3 is the His4735. Residues Ser4844 to Pro4988 form a C-terminal hotdog fold 3 region. The active-site Proton donor; for dehydratase activity 3 is Asp4906. The WD 5 repeat unit spans residues His5206–Ala5244. Residues Ile5275 to Ile5303 are a coiled coil.

Belongs to the ATP-dependent AMP-binding enzyme family. Requires pantetheine 4'-phosphate as cofactor.

It localises to the cytoplasm. Its pathway is antibiotic biosynthesis; bacillaene biosynthesis. Its function is as follows. Involved in some intermediate steps for the synthesis of the antibiotic polyketide bacillaene which is involved in secondary metabolism. The sequence is that of Polyketide synthase PksN (pksN) from Bacillus subtilis (strain 168).